Reading from the N-terminus, the 119-residue chain is Large ribosomal subunit protein uL22 (119 aa).

Belongs to the universal ribosomal protein uL22 family. In terms of assembly, part of the 50S ribosomal subunit.

Its function is as follows. This protein binds specifically to 23S rRNA; its binding is stimulated by other ribosomal proteins, e.g. L4, L17, and L20. It is important during the early stages of 50S assembly. It makes multiple contacts with different domains of the 23S rRNA in the assembled 50S subunit and ribosome. The globular domain of the protein is located near the polypeptide exit tunnel on the outside of the subunit, while an extended beta-hairpin is found that lines the wall of the exit tunnel in the center of the 70S ribosome. This chain is Large ribosomal subunit protein uL22, found in Microcystis aeruginosa (strain NIES-843 / IAM M-2473).